A 111-amino-acid chain; its full sequence is MSKLLETLEEEKTVEQKPRSQEEEDHQDSSKKEELLESLCTPTSSDHKIPEVETCPPPPRKRPREISLTKKTRLSKDLRFFEATDVGSQEVETLFVHEPNHVRKKRRSNSA.

Residues Met-1–Ile-66 form a disordered region. The span at Glu-10–Leu-35 shows a compositional bias: basic and acidic residues.

In terms of assembly, interacts with CYCD2-1. Interacts with CDKB1-1. In terms of tissue distribution, expressed at low levels in roots and stems. Expressed in the root vascular tissue.

It localises to the nucleus. Functionally, cyclin-dependent protein kinase (CDK) inhibitor that restricts cell proliferation and cooperates with SIM and SMR1 to promote endoreplication during leaf development. In Arabidopsis thaliana (Mouse-ear cress), this protein is Cyclin-dependent protein kinase inhibitor SMR2.